Here is a 283-residue protein sequence, read N- to C-terminus: Bifunctional protein FolD (283 aa).

NADP(+) contacts are provided by residues 165 to 167 (GRS), Ser-190, and Val-231.

This sequence belongs to the tetrahydrofolate dehydrogenase/cyclohydrolase family. Homodimer. Interacts with BrxC.

It carries out the reaction (6R)-5,10-methylene-5,6,7,8-tetrahydrofolate + NADP(+) = (6R)-5,10-methenyltetrahydrofolate + NADPH. The enzyme catalyses (6R)-5,10-methenyltetrahydrofolate + H2O = (6R)-10-formyltetrahydrofolate + H(+). Its pathway is one-carbon metabolism; tetrahydrofolate interconversion. Functionally, catalyzes the oxidation of 5,10-methylenetetrahydrofolate to 5,10-methenyltetrahydrofolate and then the hydrolysis of 5,10-methenyltetrahydrofolate to 10-formyltetrahydrofolate. The chain is Bifunctional protein FolD from Bacillus subtilis (strain 168).